A 340-amino-acid chain; its full sequence is Beta-ketoacyl-[acyl-carrier-protein] synthase III (340 aa).

Catalysis depends on residues Cys-122 and His-260. Positions 261-265 (QANTR) are ACP-binding. Asn-291 is a catalytic residue.

It belongs to the thiolase-like superfamily. FabH family. In terms of assembly, homodimer.

It localises to the cytoplasm. The enzyme catalyses malonyl-[ACP] + acetyl-CoA + H(+) = 3-oxobutanoyl-[ACP] + CO2 + CoA. It participates in lipid metabolism; fatty acid biosynthesis. Catalyzes the condensation reaction of fatty acid synthesis by the addition to an acyl acceptor of two carbons from malonyl-ACP. Catalyzes the first condensation reaction which initiates fatty acid synthesis and may therefore play a role in governing the total rate of fatty acid production. Possesses both acetoacetyl-ACP synthase and acetyl transacylase activities. Its substrate specificity determines the biosynthesis of branched-chain and/or straight-chain of fatty acids. The polypeptide is Beta-ketoacyl-[acyl-carrier-protein] synthase III (Mycobacteroides abscessus (strain ATCC 19977 / DSM 44196 / CCUG 20993 / CIP 104536 / JCM 13569 / NCTC 13031 / TMC 1543 / L948) (Mycobacterium abscessus)).